The sequence spans 67 residues: Large ribosomal subunit protein bL32 (67 aa).

Residues 1–44 (MAVQQNRKSPSKRDMRRSHDALGFSTLSTDSKSGERHRRHHVTK) form a disordered region. A compositionally biased stretch (basic and acidic residues) spans 11-20 (SKRDMRRSHD).

Belongs to the bacterial ribosomal protein bL32 family.

This Dichelobacter nodosus (strain VCS1703A) protein is Large ribosomal subunit protein bL32.